A 245-amino-acid chain; its full sequence is Thiopurine S-methyltransferase (245 aa).

29-40 (WQEKWVSRRIGF) is a binding site for S-adenosyl-L-methionine. Substrate is bound at residue phenylalanine 40. N6-acetyllysine is present on lysine 58. S-adenosyl-L-methionine is bound by residues leucine 69, glutamate 90, and arginine 152.

This sequence belongs to the class I-like SAM-binding methyltransferase superfamily. TPMT family. Monomer.

The protein localises to the cytoplasm. It carries out the reaction S-adenosyl-L-methionine + a thiopurine = S-adenosyl-L-homocysteine + a thiopurine S-methylether.. The sequence is that of Thiopurine S-methyltransferase (TPMT) from Canis lupus familiaris (Dog).